A 140-amino-acid polypeptide reads, in one-letter code: Large ribosomal subunit protein bL17 (140 aa).

The protein belongs to the bacterial ribosomal protein bL17 family. In terms of assembly, part of the 50S ribosomal subunit. Contacts protein L32.

The chain is Large ribosomal subunit protein bL17 from Rhizobium leguminosarum bv. trifolii (strain WSM2304).